A 294-amino-acid chain; its full sequence is N-acetylmuramic acid 6-phosphate etherase (294 aa).

Positions 56-219 (TSYSLKNGGR…STLSMVSVGK (164 aa)) constitute an SIS domain. Glu84 (proton donor) is an active-site residue. Residue Glu115 is part of the active site.

This sequence belongs to the GCKR-like family. MurNAc-6-P etherase subfamily. As to quaternary structure, homodimer.

It carries out the reaction N-acetyl-D-muramate 6-phosphate + H2O = N-acetyl-D-glucosamine 6-phosphate + (R)-lactate. It participates in amino-sugar metabolism; 1,6-anhydro-N-acetylmuramate degradation. The protein operates within amino-sugar metabolism; N-acetylmuramate degradation. Its pathway is cell wall biogenesis; peptidoglycan recycling. Functionally, specifically catalyzes the cleavage of the D-lactyl ether substituent of MurNAc 6-phosphate, producing GlcNAc 6-phosphate and D-lactate. Together with AnmK, is also required for the utilization of anhydro-N-acetylmuramic acid (anhMurNAc) either imported from the medium or derived from its own cell wall murein, and thus plays a role in cell wall recycling. In Francisella tularensis subsp. novicida (strain U112), this protein is N-acetylmuramic acid 6-phosphate etherase.